A 235-amino-acid polypeptide reads, in one-letter code: Large ribosomal subunit protein uL1 (235 aa).

It belongs to the universal ribosomal protein uL1 family. Part of the 50S ribosomal subunit.

Its function is as follows. Binds directly to 23S rRNA. The L1 stalk is quite mobile in the ribosome, and is involved in E site tRNA release. Protein L1 is also a translational repressor protein, it controls the translation of the L11 operon by binding to its mRNA. The sequence is that of Large ribosomal subunit protein uL1 from Prochlorococcus marinus (strain MIT 9215).